An 89-amino-acid chain; its full sequence is Putative acyl-CoA-binding protein (89 aa).

Positions 3–88 (VEEQFKTSAE…VKELVEKNGL (86 aa)) constitute an ACB domain. Residues Lys15, 30-34 (YSLYK), Lys52, Lys56, and Tyr75 contribute to the an acyl-CoA site.

The protein belongs to the ACBP family.

Functionally, binds medium- and long-chain acyl-CoA esters with very high affinity and may function as an intracellular carrier of acyl-CoA esters. This chain is Putative acyl-CoA-binding protein, found in Hypsibius exemplaris (Freshwater tardigrade).